A 538-amino-acid polypeptide reads, in one-letter code: Importin subunit alpha-4 (538 aa).

The IBB domain maps to 1–58; that stretch reads MSLRPSTRAELRKKIYKTGVDADEARRRREDNLVEIRKNKREDSLLKKRREGMMLQQQ. ARM repeat units follow at residues 112–152, 155–194, 197–237, 239–278, 281–320, 323–363, 366–405, and 409–448; these read SPPI…NVAS, SDHTRVVIEQGAVPIFVKLLTSASDDVREQAVWALGNVAG, PNCR…NFCR, KPPTPFEQVKPALPILRQLIYLNDEEVLTDACWALSYLSD, NDKIQAVIEAGVCPRLVELLGHQSPTVLIPALRTVGNIVT, DSQT…NITA, KLQIEAVVGAGIILPLVHLLQNAEFDIKKEAAWAISNATS, and HEQIQYLVTQGCIKPLCDLLICPDPRIVTVCLEGLENILK.

Belongs to the importin alpha family. Forms a complex with importin subunit beta-1. Interacts with A.tumefaciens VirD2 and VirE2.

The protein localises to the nucleus envelope. In terms of biological role, binds to conventional NLS motifs and mediates nuclear protein import across the nuclear envelope. Acts as a cellular receptor for the nuclear import of the virD2 protein of Agrobacterium and is essential for Agrobacterium-mediated root transformation. The chain is Importin subunit alpha-4 from Arabidopsis thaliana (Mouse-ear cress).